The chain runs to 251 residues: Phosphoribosylaminoimidazole-succinocarboxamide synthase (251 aa).

It belongs to the SAICAR synthetase family.

The enzyme catalyses 5-amino-1-(5-phospho-D-ribosyl)imidazole-4-carboxylate + L-aspartate + ATP = (2S)-2-[5-amino-1-(5-phospho-beta-D-ribosyl)imidazole-4-carboxamido]succinate + ADP + phosphate + 2 H(+). Its pathway is purine metabolism; IMP biosynthesis via de novo pathway; 5-amino-1-(5-phospho-D-ribosyl)imidazole-4-carboxamide from 5-amino-1-(5-phospho-D-ribosyl)imidazole-4-carboxylate: step 1/2. The sequence is that of Phosphoribosylaminoimidazole-succinocarboxamide synthase from Ruegeria pomeroyi (strain ATCC 700808 / DSM 15171 / DSS-3) (Silicibacter pomeroyi).